The primary structure comprises 132 residues: Large ribosomal subunit protein uL14 (132 aa).

This sequence belongs to the universal ribosomal protein uL14 family. In terms of assembly, part of the 50S ribosomal subunit. Forms a cluster with proteins L3 and L24e, part of which may contact the 16S rRNA in 2 intersubunit bridges.

In terms of biological role, binds to 23S rRNA. Forms part of two intersubunit bridges in the 70S ribosome. The sequence is that of Large ribosomal subunit protein uL14 from Methanosarcina acetivorans (strain ATCC 35395 / DSM 2834 / JCM 12185 / C2A).